A 152-amino-acid chain; its full sequence is D-aminoacyl-tRNA deacylase (152 aa).

The Gly-cisPro motif, important for rejection of L-amino acids motif lies at 142-143 (GP).

The protein belongs to the DTD family. Homodimer.

The protein localises to the cytoplasm. It carries out the reaction glycyl-tRNA(Ala) + H2O = tRNA(Ala) + glycine + H(+). The enzyme catalyses a D-aminoacyl-tRNA + H2O = a tRNA + a D-alpha-amino acid + H(+). In terms of biological role, an aminoacyl-tRNA editing enzyme that deacylates mischarged D-aminoacyl-tRNAs. Also deacylates mischarged glycyl-tRNA(Ala), protecting cells against glycine mischarging by AlaRS. Acts via tRNA-based rather than protein-based catalysis; rejects L-amino acids rather than detecting D-amino acids in the active site. By recycling D-aminoacyl-tRNA to D-amino acids and free tRNA molecules, this enzyme counteracts the toxicity associated with the formation of D-aminoacyl-tRNA entities in vivo and helps enforce protein L-homochirality. The chain is D-aminoacyl-tRNA deacylase from Burkholderia mallei (strain NCTC 10247).